The sequence spans 829 residues: E3 ubiquitin-protein ligase Jade-2 (829 aa).

Residues 1–52 (MEEKRRKYSISSDNSDTTDGHVTSTSASRCSKLPSSTKSGWPRQNEKKPSEV) form a disordered region. 2 positions are modified to phosphoserine: Ser9 and Ser15. Over residues 9–39 (SISSDNSDTTDGHVTSTSASRCSKLPSSTKS) the composition is skewed to polar residues. 2 positions are modified to N6-acetyllysine: Lys32 and Lys38. Ser117 carries the post-translational modification Phosphoserine. A PHD-type 1 zinc finger spans residues 199 to 249 (DVVCDVCRSPEGEDGNEMVFCDKCNVCVHQACYGILKVPTGSWLCRTCALG). The C2HC pre-PHD-type zinc finger occupies 251–285 (QPKCLLCPKRGGALKPTRSGTKWVHVSCALWIPEV). Position 298 is an N6-acetyllysine (Lys298). The PHD-type 2 zinc-finger motif lies at 309-365 (LSCSLCKECTGTCIQCSMPSCITAFHVTCAFDRGLEMRTILADNDEVKFKSLCQEHS). Disordered regions lie at residues 362–383 (QEHSDGGPRSEPTSEPVEPSQA), 517–555 (REPSGRRSKGKKNDSKRKGREGPKGSSPEKKEKVKAGPE), and 622–817 (SFMR…REAG). Residues 522–535 (RRSKGKKNDSKRKG) show a composition bias toward basic residues. The segment covering 536-552 (REGPKGSSPEKKEKVKA) has biased composition (basic and acidic residues). Residues 637–650 (KARGRTRLPAKKKP) are compositionally biased toward basic residues. Residues 776–786 (ERPKVSLHFDT) show a composition bias toward basic and acidic residues. A compositionally biased stretch (acidic residues) spans 792–806 (FSDEEMSDSEVEAED).

The protein belongs to the JADE family. Component of the HBO1 complex composed at least of ING4 or ING5, MYST2/HBO1, MEAF6, and one of JADE1, JADE2 and JADE3. Interacts (via C-terminus) with KDM1A (via AOD/Tower domain).

The catalysed reaction is S-ubiquitinyl-[E2 ubiquitin-conjugating enzyme]-L-cysteine + [acceptor protein]-L-lysine = [E2 ubiquitin-conjugating enzyme]-L-cysteine + N(6)-ubiquitinyl-[acceptor protein]-L-lysine.. It functions in the pathway protein modification; protein ubiquitination. In terms of biological role, scaffold subunit of some HBO1 complexes, which have a histone H4 acetyltransferase activity. Acts as a E3 ubiquitin-protein ligase mediating the ubiquitination and subsequent proteasomal degradation of target protein histone demethylase KDM1A. Also acts as a ubiquitin ligase E3 toward itself. Positive regulator of neurogenesis. This is E3 ubiquitin-protein ligase Jade-2 (Jade2) from Mus musculus (Mouse).